The chain runs to 316 residues: Probable cell division protein WhiA (316 aa).

A DNA-binding region (H-T-H motif) is located at residues 275–309; that stretch reads TLKELGEMVSGGKISKSGINHRLRKIDEIAEKLRA.

This sequence belongs to the WhiA family.

Its function is as follows. Involved in cell division and chromosome segregation. The sequence is that of Probable cell division protein WhiA from Bacillus cereus (strain G9842).